The following is a 503-amino-acid chain: Poxin-Schlafen (503 aa).

The segment at 1 to 236 (MFYAHAFGGY…SKEERVDYVL (236 aa)) is poxin-like. The active-site Proton donor is the H15. The Shared with catalytic histidine of dimeric partner role is filled by Y136. The active-site Proton acceptor; shared with catalytic histidine of dimeric partner is K140. Positions 237-503 (MKRLESIHHL…PDEWVSHIKF (267 aa)) are schlafen-like.

It in the N-terminal section; belongs to the poxin family. In the C-terminal section; belongs to the Schlafen protein family. Subgroup poxviridae B3 subfamily. In terms of assembly, homodimer.

The enzyme catalyses 2',3'-cGAMP + H2O = Gp(2'-5')Ap(3') + H(+). Functionally, nuclease that is responsible for viral evasion of host cGAS-STING innate immunity. Cleaves 2',3'-cGAMP which is produced by host cGAS following recognition of intracellular foreign DNA and blocks the subsequent 2',3'-cGAMP-mediated activation of TMEM173/STING which normally spreads to adjacent cells and activates the interferon and NF-kappa-B immune responses. This Cynomys gunnisoni (Gunnison's prairie dog) protein is Poxin-Schlafen (OPG188).